Here is a 366-residue protein sequence, read N- to C-terminus: Transmembrane protein 25 (366 aa).

An N-terminal signal peptide occupies residues 1-26 (MALPPGPAALRHTLLLLPALLSSGWG). Residues 27 to 232 (ELEPQIDGQT…APGLLATRVE (206 aa)) lie on the Extracellular side of the membrane. The region spanning 30 to 123 (PQIDGQTWAE…SGRSANASVI (94 aa)) is the Ig-like domain. Cys52 and Cys107 are disulfide-bonded. Asn106, Asn162, Asn175, Asn192, and Asn205 each carry an N-linked (GlcNAc...) asparagine glycan. Residues 233–253 (VPLLGIVVAAGLALGTLVGFS) traverse the membrane as a helical segment. Residues 254-366 (TLVACLVCRK…SSVSSDEIWL (113 aa)) lie on the Cytoplasmic side of the membrane. Residues 299–308 (PSNLQLNDLT) are compositionally biased toward polar residues. A disordered region spans residues 299–335 (PSNLQLNDLTPDSRAVKPADRQMAQNNSRPELLDPEP).

Interacts with GRIN2B. As to expression, expressed throughout the brain with higher levels in the pyramidal cell layer of the hippocampal CA1 and CA3 regions. Also highly expressed within the hippocampal dentate gyrus region and cerebellum and in scattered neurons in the cerebral cortex.

The protein resides in the cell membrane. It is found in the secreted. It localises to the late endosome. Its subcellular location is the lysosome. Its function is as follows. In neurons, modulates the degradation of NMDA receptor GRIN2B subunit. Plays a role in the regulation of neuronal excitability. This is Transmembrane protein 25 (TMEM25) from Homo sapiens (Human).